Consider the following 634-residue polypeptide: MTNSNTRTESHFDYVKIKLASPERIREWGQRTLPNGQVVGEVTKPETINYRTLKPEMDGLFCEKIFGPSKDWECHCGKYKRVRHRGIVCERCGVEVTESRVRRHRMGFIKLAAPVSHVWYLKGIPSYVAILLDMPLRDVEQIVYFNCYVVLDPGDHKTLKYKQLLTEDEWLEIEDEIYAEDSEIETEPEVGIGAEALKALLEDLELTEIAEQLREDISGSKGQKRAKLIKRLRVIDNFIATDARPEWMVLDAIPVIPPDLRPMVQLDGGRFATSDLNDLYRRVINRNNRLARLQEILAPEIIVRNEKRMLQEAVDALIDNGRRGRTVVGANNRPLKSLSDIIEGKQGRFRQNLLGKRVDYSGRSVIVVGPKLKMHQCGLPKEMAIELFQPFVIHRLIRQNIVNNIKAAKKLIQRADDEVMQVLQEVIDGHPILLNRAPTLHRLGIQAFEPKLVDGRAIQLHPLVCPAFNADFDGDQMAVHVPLALEAQTEARMLMLASNNILSPATGQPIITPSQDMVLGAYYLTATRQERSKPEFGDRSRTYANLEDVCHAFEEKRITLHDWVWVRFNGAVDDDDEAKEPIKSETLSDGTRVEQWQYRRDRLDEDGALISRYVLTTTGRVVMNRTIIDAVVTR.

Residues Cys-74, Cys-76, Cys-89, and Cys-92 each coordinate Zn(2+). Residues Asp-471, Asp-473, and Asp-475 each contribute to the Mg(2+) site.

The protein belongs to the RNA polymerase beta' chain family. RpoC1 subfamily. In cyanobacteria the RNAP catalytic core is composed of 2 alpha, 1 beta, 1 beta', 1 gamma and 1 omega subunit. When a sigma factor is associated with the core the holoenzyme is formed, which can initiate transcription. Mg(2+) is required as a cofactor. The cofactor is Zn(2+).

It catalyses the reaction RNA(n) + a ribonucleoside 5'-triphosphate = RNA(n+1) + diphosphate. DNA-dependent RNA polymerase catalyzes the transcription of DNA into RNA using the four ribonucleoside triphosphates as substrates. The protein is DNA-directed RNA polymerase subunit gamma of Synechococcus sp. (strain RCC307).